Here is a 288-residue protein sequence, read N- to C-terminus: 33 kDa chaperonin (288 aa).

2 disulfide bridges follow: Cys237-Cys239 and Cys270-Cys273.

It belongs to the HSP33 family. Post-translationally, under oxidizing conditions two disulfide bonds are formed involving the reactive cysteines. Under reducing conditions zinc is bound to the reactive cysteines and the protein is inactive.

The protein localises to the cytoplasm. In terms of biological role, redox regulated molecular chaperone. Protects both thermally unfolding and oxidatively damaged proteins from irreversible aggregation. Plays an important role in the bacterial defense system toward oxidative stress. This Agathobacter rectalis (strain ATCC 33656 / DSM 3377 / JCM 17463 / KCTC 5835 / VPI 0990) (Eubacterium rectale) protein is 33 kDa chaperonin.